The sequence spans 375 residues: Filamin-binding LIM protein 1 (375 aa).

A filamin-binding region spans residues 1-69 (MASKPEKRVA…KTWTPSGKTN (69 aa)). The tract at residues 40-176 (ARPWEMLPTK…PPPEEPVTLP (137 aa)) is disordered. The span at 60-83 (KTWTPSGKTNASLSGVTPQLSNGG) shows a compositional bias: polar residues. Composition is skewed to pro residues over residues 98-107 (LPPPPPPPSA) and 133-144 (LPPPPPPPPPQA). LIM zinc-binding domains follow at residues 183–244 (DVCG…TLEK), 245–302 (CGKC…RKFA), and 303–372 (PVCS…RSAA). The FERMT2-binding stretch occupies residues 278–375 (ISDESFALDS…HLKRSAAGCC (98 aa)).

Interacts with FERMT2, FLNA, FLNB and FLNC. Interacts with NKX2-5.

It localises to the cell junction. Its subcellular location is the focal adhesion. The protein resides in the cytoplasm. It is found in the cytoskeleton. The protein localises to the stress fiber. In terms of biological role, serves as an anchoring site for cell-ECM adhesion proteins and filamin-containing actin filaments. Is implicated in cell shape modulation (spreading) and motility. May participate in the regulation of filamin-mediated cross-linking and stabilization of actin filaments. May also regulate the assembly of filamin-containing signaling complexes that control actin assembly. Promotes dissociation of FLNA from ITGB3 and ITGB7. Promotes activation of integrins and regulates integrin-mediated cell-cell adhesion. This Mus musculus (Mouse) protein is Filamin-binding LIM protein 1 (Fblim1).